The primary structure comprises 100 residues: Urease subunit gamma (100 aa).

The protein belongs to the urease gamma subunit family. As to quaternary structure, heterotrimer of UreA (gamma), UreB (beta) and UreC (alpha) subunits. Three heterotrimers associate to form the active enzyme.

Its subcellular location is the cytoplasm. It carries out the reaction urea + 2 H2O + H(+) = hydrogencarbonate + 2 NH4(+). The protein operates within nitrogen metabolism; urea degradation; CO(2) and NH(3) from urea (urease route): step 1/1. In Yersinia rohdei, this protein is Urease subunit gamma.